A 613-amino-acid polypeptide reads, in one-letter code: Nuclear receptor subfamily 1 group D member 1 (613 aa).

Polar residues predominate over residues 1 to 48 (MTTLDSNNNTGGVITYIGSSGSSPNRTSPESLYSDSSNGSFQSLTQGC). Positions 1–70 (MTTLDSNNNT…TQDPARSFGS (70 aa)) are required for phosphorylation by CSNK1E and cytoplasmic localization. Residues 1-102 (MTTLDSNNNT…SSFYNGSPPG (102 aa)) form a disordered region. The tract at residues 1-129 (MTTLDSNNNT…TSNITKLNGM (129 aa)) is modulating. The interval 49-285 (PTYFPPSPTG…PPRSPSPEPT (237 aa)) is crucial for activation of GJA1. S55 and S59 each carry phosphoserine; by GSK3-beta. Residues 69–102 (GSIPPSLGDDGSPSSSSSSSSSSSSSFYNGSPPG) show a composition bias toward low complexity. A DNA-binding region (nuclear receptor) is located at residues 130–206 (VLLCKVCGDV…VGMSRDAVRF (77 aa)). 2 consecutive NR C4-type zinc fingers follow at residues 133 to 153 (CKVC…CEGC) and 170 to 194 (CLKN…FKKC). N6-acetyllysine; by KAT5 is present on residues K192 and K193. Residues 233–286 (SSQCPLETPPTQHPTPGPMGPSPPPAPAPSPLVGFSQFPQQLTPPRSPSPEPTV) are disordered. A compositionally biased stretch (pro residues) spans 239-262 (ETPPTQHPTPGPMGPSPPPAPAPS). A Phosphothreonine; by CDK1 modification is found at T275. The 329-residue stretch at 285–613 (TVEDVISQVA…KLLSFRVDAQ (329 aa)) folds into the NR LBD domain. C417 lines the heme pocket. An N6-acetyllysine modification is found at K590. H601 is a binding site for heme.

This sequence belongs to the nuclear hormone receptor family. NR1 subfamily. Binds DNA as a monomer or a homodimer. Interacts with C1D, SP1 and ZNHIT1. Interacts with OPHN1 (via C-terminus). Interacts with PER2; the interaction associates PER2 to BMAL1 promoter region. Interacts with CRY1. Interacts with CCAR2. Interacts with NR2E3. Interacts with SIAH2. Interacts with FBXW7 and CDK1. Interacts with HUWE1. Interacts with NR0B2. Interacts with NFIL3. Interacts (via domain NR LBD) with HSP90AA1 and HSP90AB1. Post-translationally, ubiquitinated, leading to its proteasomal degradation. Ubiquitinated by the SCF(FBXW7) complex when phosphorylated by CDK1 leading to its proteasomal degradation. Ubiquitinated by SIAH2; leading to its proteasomal degradation. Rapidly ubiquitinated in response to inflammatory triggers and sumoylation is a prerequisite to its ubiquitination. In terms of processing, sumoylated by UBE2I, desumoylated by SENP1, and sumoylation is a prerequisite to its ubiquitination. Phosphorylated by CSNK1E; phosphorylation enhances its cytoplasmic localization. Post-translationally, undergoes lysosome-mediated degradation in a time-dependent manner in the liver. In terms of tissue distribution, expressed in all tissues and cell lines examined. Expressed at high levels in some squamous carcinoma cell lines.

The protein localises to the nucleus. The protein resides in the cytoplasm. It localises to the cell projection. It is found in the dendrite. Its subcellular location is the dendritic spine. In terms of biological role, transcriptional repressor which coordinates circadian rhythm and metabolic pathways in a heme-dependent manner. Integral component of the complex transcription machinery that governs circadian rhythmicity and forms a critical negative limb of the circadian clock by directly repressing the expression of core clock components BMAL1, CLOCK and CRY1. Also regulates genes involved in metabolic functions, including lipid and bile acid metabolism, adipogenesis, gluconeogenesis and the macrophage inflammatory response. Acts as a receptor for heme which stimulates its interaction with the NCOR1/HDAC3 corepressor complex, enhancing transcriptional repression. Recognizes two classes of DNA response elements within the promoter of its target genes and can bind to DNA as either monomers or homodimers, depending on the nature of the response element. Binds as a monomer to a response element composed of the consensus half-site motif 5'-[A/G]GGTCA-3' preceded by an A/T-rich 5' sequence (RevRE), or as a homodimer to a direct repeat of the core motif spaced by two nucleotides (RevDR-2). Acts as a potent competitive repressor of ROR alpha (RORA) function and regulates the levels of its ligand heme by repressing the expression of PPARGC1A, a potent inducer of heme synthesis. Regulates lipid metabolism by repressing the expression of APOC3 and by influencing the activity of sterol response element binding proteins (SREBPs); represses INSIG2 which interferes with the proteolytic activation of SREBPs which in turn govern the rhythmic expression of enzymes with key functions in sterol and fatty acid synthesis. Regulates gluconeogenesis via repression of G6PC1 and PEPCK and adipocyte differentiation via repression of PPARG. Regulates glucagon release in pancreatic alpha-cells via the AMPK-NAMPT-SIRT1 pathway and the proliferation, glucose-induced insulin secretion and expression of key lipogenic genes in pancreatic-beta cells. Positively regulates bile acid synthesis by increasing hepatic expression of CYP7A1 via repression of NR0B2 and NFIL3 which are negative regulators of CYP7A1. Modulates skeletal muscle oxidative capacity by regulating mitochondrial biogenesis and autophagy; controls mitochondrial biogenesis and respiration by interfering with the STK11-PRKAA1/2-SIRT1-PPARGC1A signaling pathway. Represses the expression of SERPINE1/PAI1, an important modulator of cardiovascular disease and the expression of inflammatory cytokines and chemokines in macrophages. Represses gene expression at a distance in macrophages by inhibiting the transcription of enhancer-derived RNAs (eRNAs). Plays a role in the circadian regulation of body temperature and negatively regulates thermogenic transcriptional programs in brown adipose tissue (BAT); imposes a circadian oscillation in BAT activity, increasing body temperature when awake and depressing thermogenesis during sleep. In concert with NR2E3, regulates transcriptional networks critical for photoreceptor development and function. In addition to its activity as a repressor, can also act as a transcriptional activator. In the ovarian granulosa cells acts as a transcriptional activator of STAR which plays a role in steroid biosynthesis. In collaboration with SP1, activates GJA1 transcription in a heme-independent manner. Represses the transcription of CYP2B10, CYP4A10 and CYP4A14. Represses the transcription of CES2. Represses and regulates the circadian expression of TSHB in a NCOR1-dependent manner. Negatively regulates the protein stability of NR3C1 and influences the time-dependent subcellular distribution of NR3C1, thereby affecting its transcriptional regulatory activity. Plays a critical role in the circadian control of neutrophilic inflammation in the lung; under resting, non-stress conditions, acts as a rhythmic repressor to limit inflammatory activity whereas in the presence of inflammatory triggers undergoes ubiquitin-mediated degradation thereby relieving inhibition of the inflammatory response. Plays a key role in the circadian regulation of microglial activation and neuroinflammation; suppresses microglial activation through the NF-kappaB pathway in the central nervous system. Plays a role in the regulation of the diurnal rhythms of lipid and protein metabolism in the skeletal muscle via transcriptional repression of genes controlling lipid and amino acid metabolism in the muscle. The sequence is that of Nuclear receptor subfamily 1 group D member 1 (NR1D1) from Bos taurus (Bovine).